We begin with the raw amino-acid sequence, 738 residues long: Protein Aster-B (738 aa).

The disordered stretch occupies residues 1–81 (MKGFKLSCTA…SGGKNSKKSQ (81 aa)). Over residues 8 to 19 (CTASNSNRSTPA) the composition is skewed to polar residues. Residues Ser-28 and Ser-30 each carry the phosphoserine modification. Basic and acidic residues predominate over residues 41-51 (MVEKGSDHSSD). Over residues 59-70 (QGVQRSCSSQSG) the composition is skewed to low complexity. The GRAM domain maps to 96–163 (EDFRKLFKQL…KDICSMTKEK (68 aa)). A disordered region spans residues 254–301 (EENEVNDSSSKSSIETKPDASPQLPKKSITNSTLTSTGSSEAPVSFDG). The span at 259 to 268 (NDSSSKSSIE) shows a compositional bias: polar residues. A Phosphoserine modification is found at Ser-274. Residues 281–295 (SITNSTLTSTGSSEA) show a composition bias toward polar residues. Positions 372–543 (SGRQYVNEVF…ELAKTESTYL (172 aa)) constitute a VASt domain. Tyr-389 is modified (phosphotyrosine). Positions 544–566 (AEMHRQSPKEKASKTTTVRRRKR) are disordered. The span at 545–556 (EMHRQSPKEKAS) shows a compositional bias: basic and acidic residues. Ser-550 and Ser-581 each carry phosphoserine. Phosphothreonine occurs at positions 584, 585, and 587. A helical membrane pass occupies residues 623–643 (LLLVISCVICFSLVLLVILNM).

It localises to the endoplasmic reticulum membrane. The protein localises to the cell membrane. Functionally, cholesterol transporter that mediates non-vesicular transport of cholesterol from the plasma membrane (PM) to the endoplasmic reticulum (ER). Contains unique domains for binding cholesterol and the PM, thereby serving as a molecular bridge for the transfer of cholesterol from the PM to the ER. Plays a crucial role in cholesterol homeostasis in the adrenal gland and has the unique ability to localize to the PM based on the level of membrane cholesterol. In lipid-poor conditions localizes to the ER membrane and in response to excess cholesterol in the PM is recruited to the endoplasmic reticulum-plasma membrane contact sites (EPCS) which is mediated by the GRAM domain. At the EPCS, the sterol-binding VASt/ASTER domain binds to the cholesterol in the PM and facilitates its transfer from the PM to ER. The polypeptide is Protein Aster-B (GRAMD1B) (Homo sapiens (Human)).